The sequence spans 710 residues: Polyribonucleotide nucleotidyltransferase (710 aa).

Mg(2+) is bound by residues aspartate 489 and aspartate 495. The 60-residue stretch at 556–615 folds into the KH domain; the sequence is PKIDTIKIDVDKIKVVIGKGGETIDKIIAETGVKIDIDDEGNVSIYSSDQAAINRTKEII. The region spanning 625 to 693 is the S1 motif domain; the sequence is GEVYHAKVVR…EKGRVDASMK (69 aa). Residues 691–710 form a disordered region; sequence SMKALIPRPPKPEKKEEKHD. Basic and acidic residues predominate over residues 700–710; the sequence is PKPEKKEEKHD.

Requires Mg(2+) as cofactor.

The protein localises to the cytoplasm. It carries out the reaction RNA(n+1) + phosphate = RNA(n) + a ribonucleoside 5'-diphosphate. Functionally, involved in mRNA degradation. Catalyzes the phosphorolysis of single-stranded polyribonucleotides processively in the 3'- to 5'-direction. The sequence is that of Polyribonucleotide nucleotidyltransferase from Streptococcus pyogenes serotype M6 (strain ATCC BAA-946 / MGAS10394).